A 706-amino-acid chain; its full sequence is Glutamine-dependent NAD(+) synthetase (706 aa).

The CN hydrolase domain occupies 5-275 (VTVATCALNQ…VEVLTATLDL (271 aa)). E45 (proton acceptor; for glutaminase activity) is an active-site residue. Residue K114 is the For glutaminase activity of the active site. The active-site Nucleophile; for glutaminase activity is C175. The segment at 325-706 (YHSPAEEISL…RQRQELDGVD (382 aa)) is ligase. 355-362 (PLSGGVDS) is an ATP binding site. The active site involves S357.

This sequence in the C-terminal section; belongs to the NAD synthetase family. In terms of assembly, homohexamer.

It carries out the reaction deamido-NAD(+) + L-glutamine + ATP + H2O = L-glutamate + AMP + diphosphate + NAD(+) + H(+). It participates in cofactor biosynthesis; NAD(+) biosynthesis; NAD(+) from deamido-NAD(+) (L-Gln route): step 1/1. Functionally, catalyzes the ATP-dependent amidation of deamido-NAD to form NAD. Uses L-glutamine as a nitrogen source. The polypeptide is Glutamine-dependent NAD(+) synthetase (NADSYN1) (Bos taurus (Bovine)).